A 207-amino-acid polypeptide reads, in one-letter code: Ribosomal RNA large subunit methyltransferase E (207 aa).

Residues Gly49, Trp51, Asp69, Asp87, and Asp111 each contribute to the S-adenosyl-L-methionine site. The active-site Proton acceptor is the Lys151.

This sequence belongs to the class I-like SAM-binding methyltransferase superfamily. RNA methyltransferase RlmE family.

The protein resides in the cytoplasm. The enzyme catalyses uridine(2552) in 23S rRNA + S-adenosyl-L-methionine = 2'-O-methyluridine(2552) in 23S rRNA + S-adenosyl-L-homocysteine + H(+). Specifically methylates the uridine in position 2552 of 23S rRNA at the 2'-O position of the ribose in the fully assembled 50S ribosomal subunit. This chain is Ribosomal RNA large subunit methyltransferase E, found in Oleidesulfovibrio alaskensis (strain ATCC BAA-1058 / DSM 17464 / G20) (Desulfovibrio alaskensis).